The chain runs to 289 residues: NAD kinase (289 aa).

The active-site Proton acceptor is D68. NAD(+) contacts are provided by residues 68-69 (DG), K73, 142-143 (ND), R153, D172, 183-188 (TAYSLS), and Q243.

This sequence belongs to the NAD kinase family. Requires a divalent metal cation as cofactor.

It is found in the cytoplasm. The catalysed reaction is NAD(+) + ATP = ADP + NADP(+) + H(+). Functionally, involved in the regulation of the intracellular balance of NAD and NADP, and is a key enzyme in the biosynthesis of NADP. Catalyzes specifically the phosphorylation on 2'-hydroxyl of the adenosine moiety of NAD to yield NADP. The polypeptide is NAD kinase (Acetivibrio thermocellus (strain ATCC 27405 / DSM 1237 / JCM 9322 / NBRC 103400 / NCIMB 10682 / NRRL B-4536 / VPI 7372) (Clostridium thermocellum)).